A 1213-amino-acid chain; its full sequence is SWI/SNF complex subunit SMARCC2 (1213 aa).

The interval 1-274 (MAVRKKDGGP…PVSRRKKISA (274 aa)) is marR-like, BRCT and chromo domains module. Residues 10–136 (PNVKYYEAAD…IEKSLVQNNC (127 aa)) enclose the MarR-like domain. A BRCT; N-terminus domain is found at 140 to 183 (PNIFLCPEIEPKLLGKLKDIVKRHQGTISEDKSNASHVVYPVPG). In terms of domain architecture, Chromo spans 189–217 (EWVRPVMKRDKQVLLHWGYYPDSYDTWIP). One can recognise a BRCT; C-terminus domain in the interval 233-257 (KPRKVHAKWILDTDTFNEWMNEEDY). Residues 256–413 (DYEVSDDKSP…GEQTKNPDLH (158 aa)) form a disordered region. The span at 275–284 (KTLTDEVNSP) shows a compositional bias: polar residues. Phosphoserine occurs at positions 283, 286, 302, 304, and 306. Lys-312 is modified (N6-(ADP-ribosyl)lysine). Lys-326 is modified (N6-acetyllysine). Residues 331–344 (HREEEQEDLTKDMD) show a composition bias toward basic and acidic residues. Ser-347 and Ser-387 each carry phosphoserine. Positions 379–398 (DLDEQDDESMETTGKDEDEN) are enriched in acidic residues. Positions 424 to 521 (IIIPSYAAWF…YQVDAESRPT (98 aa)) constitute an SWIRM domain. Residues Lys-564, Lys-566, Lys-568, and Lys-592 each participate in a glycyl lysine isopeptide (Lys-Gly) (interchain with G-Cter in SUMO2) cross-link. One can recognise an SANT domain in the interval 596-647 (SATREWTEQETLLLLEALEMYKDDWNKVSEHVGSRTQDECILHFLRLPIEDP). A Glycyl lysine isopeptide (Lys-Gly) (interchain with G-Cter in SUMO2) cross-link involves residue Lys-704. The segment at 724–848 (KVTGKADPAF…AEPEGERKTK (125 aa)) is disordered. The span at 747–777 (EPERIEESGTEEARPEGQAADEKKEPKEPRE) shows a compositional bias: basic and acidic residues. Lys-787 is covalently cross-linked (Glycyl lysine isopeptide (Lys-Gly) (interchain with G-Cter in SUMO2)). Basic and acidic residues predominate over residues 788–848 (EEISEVPKKD…AEPEGERKTK (61 aa)). Ser-813 is modified (phosphoserine). A Glycyl lysine isopeptide (Lys-Gly) (interchain with G-Cter in SUMO2) cross-link involves residue Lys-848. Residues 907–934 (EELETIMDREREALEYQRQQLLADRQAF) are a coiled coil. Disordered stretches follow at residues 947–1073 (RQQH…HPGV) and 1181–1213 (LPSA…PPPQ). The segment covering 949–962 (QHFQQMHQQQQQQP) has biased composition (low complexity). Positions 963-974 (PTLPPGSQPIPP) are enriched in pro residues. The span at 975–1033 (TGAAGPPTVHGLAVPPAAVASAPPGSGAPPGSLGPSEQIGQAGTTAGPQQPQQAGAPQP) shows a compositional bias: low complexity. Composition is skewed to pro residues over residues 1034 to 1060 (GAVP…PPSM) and 1185 to 1201 (SPLP…PTAP).

It belongs to the SMARCC family. Component of the multiprotein chromatin-remodeling complexes SWI/SNF: SWI/SNF-A (BAF), SWI/SNF-B (PBAF) and related complexes. The canonical complex contains a catalytic subunit (either SMARCA4/BRG1/BAF190A or SMARCA2/BRM/BAF190B) and at least SMARCE1, ACTL6A/BAF53, SMARCC1/BAF155, SMARCC2/BAF170, and SMARCB1/SNF5/BAF47. Other subunits specific to each of the complexes may also be present permitting several possible combinations developmentally and tissue specific. Component of the BAF complex, which includes at least actin (ACTB), ARID1A/BAF250A, ARID1B/BAF250B, SMARCA2/BRM, SMARCA4/BRG1, ACTL6A/BAF53, ACTL6B/BAF53B, SMARCE1/BAF57, SMARCC1/BAF155, SMARCC2/BAF170, SMARCB1/SNF5/INI1, and one or more SMARCD1/BAF60A, SMARCD2/BAF60B, or SMARCD3/BAF60C. In muscle cells, the BAF complex also contains DPF3. Component of neural progenitors-specific chromatin remodeling complex (npBAF complex) composed of at least, ARID1A/BAF250A or ARID1B/BAF250B, SMARCD1/BAF60A, SMARCD3/BAF60C, SMARCA2/BRM/BAF190B, SMARCA4/BRG1/BAF190A, SMARCB1/BAF47, SMARCC1/BAF155, SMARCE1/BAF57, SMARCC2/BAF170, PHF10/BAF45A, ACTL6A/BAF53A and actin. Component of neuron-specific chromatin remodeling complex (nBAF complex) composed of at least, ARID1A/BAF250A or ARID1B/BAF250B, SMARCD1/BAF60A, SMARCD3/BAF60C, SMARCA2/BRM/BAF190B, SMARCA4/BRG1/BAF190A, SMARCB1/BAF47, SMARCC1/BAF155, SMARCE1/BAF57, SMARCC2/BAF170, DPF1/BAF45B, DPF3/BAF45C, ACTL6B/BAF53B and actin. Component of the SWI/SNF-B (PBAF) chromatin remodeling complex, at least composed of SMARCA4/BRG1, SMARCB1/BAF47/SNF5, ACTL6A/BAF53A or ACTL6B/BAF53B, SMARCE1/BAF57, SMARCD1/BAF60A, SMARCD2/BAF60B, perhaps SMARCD3/BAF60C, SMARCC1/BAF155, SMARCC2/BAF170, PBRM1/BAF180, ARID2/BAF200 and actin. May also interact with the SIN3A histone deacetylase transcription repressor complex in conjunction with SMARCA2 and SMARCA4. Interacts with SMARD1. Interacts with KDM6B. Interaction with RCOR1. Interacts with DPF2. Interacts with ERCC6. Interacts with FOS. Post-translationally, mono-ADP-ribosylation at Lys-312 by SIRT6 promotes recruitment to the enhancer region of the Heme oxygenase-1 (HO-1) locus, leading to transcription activation of the locus.

The protein localises to the nucleus. In terms of biological role, involved in transcriptional activation and repression of select genes by chromatin remodeling (alteration of DNA-nucleosome topology). Component of SWI/SNF chromatin remodeling complexes that carry out key enzymatic activities, changing chromatin structure by altering DNA-histone contacts within a nucleosome in an ATP-dependent manner. Can stimulate the ATPase activity of the catalytic subunit of these complexes. May be required for CoREST dependent repression of neuronal specific gene promoters in non-neuronal cells. Belongs to the neural progenitors-specific chromatin remodeling complex (npBAF complex) and the neuron-specific chromatin remodeling complex (nBAF complex). During neural development a switch from a stem/progenitor to a postmitotic chromatin remodeling mechanism occurs as neurons exit the cell cycle and become committed to their adult state. The transition from proliferating neural stem/progenitor cells to postmitotic neurons requires a switch in subunit composition of the npBAF and nBAF complexes. As neural progenitors exit mitosis and differentiate into neurons, npBAF complexes which contain ACTL6A/BAF53A and PHF10/BAF45A, are exchanged for homologous alternative ACTL6B/BAF53B and DPF1/BAF45B or DPF3/BAF45C subunits in neuron-specific complexes (nBAF). The npBAF complex is essential for the self-renewal/proliferative capacity of the multipotent neural stem cells. The nBAF complex along with CREST plays a role regulating the activity of genes essential for dendrite growth. Critical regulator of myeloid differentiation, controlling granulocytopoiesis and the expression of genes involved in neutrophil granule formation. The polypeptide is SWI/SNF complex subunit SMARCC2 (Smarcc2) (Mus musculus (Mouse)).